A 209-amino-acid chain; its full sequence is MEQQKIPQATAKRLPLYYRFIQNLSLSGKQRVSSAELSEAVKVDSATIRRDFSYFGALGKKGYGYNVNYLLSFFRETLDQDDITRVALIGVGNLGTAFLHYNFTKNNNTKIEMAFDVSEEKVGTEIGGIPVYHLDELEERLSNDIQVAILTVPATVAQSVADRLAETNVHGILNFTPARLNVSENIRIHHIDLAVELQTLVYFLKNYPQ.

Positions 16-55 (LYYRFIQNLSLSGKQRVSSAELSEAVKVDSATIRRDFSYF) form a DNA-binding region, H-T-H motif. 90–95 (GVGNLG) lines the NAD(+) pocket.

Belongs to the transcriptional regulatory Rex family. In terms of assembly, homodimer.

The protein resides in the cytoplasm. Functionally, modulates transcription in response to changes in cellular NADH/NAD(+) redox state. The protein is Redox-sensing transcriptional repressor Rex of Bacillus cereus (strain AH187).